A 271-amino-acid polypeptide reads, in one-letter code: MNSKLSLSTKLSSNGKTQLAEYFAMPPFKVITLPSYDDAWANGLNAMQMSSSPGVLAGDLLEIDISLAKLTALSLNTQAFTRVQAMNEGDSAMQTTHILLAENSRLFYLPHPLVLHKDSVFKQKTLIEMDEQSELIYGEIVAIGRVLNDERFAFRQFSSHLKIYALQNDGKKRPLVSDCIQWLPSKMNLTALSQMENYSHQGSLTYLNLAKNNAEIKQQVQALQQQSAEEKDLLIGISQLNEYGLMVRVLGCRAEQIQKLFEKIGRLLKSV.

Belongs to the UreD family. In terms of assembly, ureD, UreF and UreG form a complex that acts as a GTP-hydrolysis-dependent molecular chaperone, activating the urease apoprotein by helping to assemble the nickel containing metallocenter of UreC. The UreE protein probably delivers the nickel.

The protein localises to the cytoplasm. Required for maturation of urease via the functional incorporation of the urease nickel metallocenter. This is Urease accessory protein UreD from Haemophilus influenzae (strain PittGG).